The primary structure comprises 610 residues: MIPVSRFFTVQDPSNALLSYTQKGIDFFEKLGQFSKEKAAIEEEYSTKLRSLAKKYAKKSEEDDEILKSVSYTSSFNSFLQQLDQIATRHQTSAEHIRGGVVSYVASKTCQMRSSRKNAINDLKTINDKLEDQINEMCKSGKCYLKSFKDAENSYQKFYKADKNLEISRLELEKARALANARNEACELAKQDYSALVRKTNAEQKRYHVELLPVIFARLKAVDKECIADMRQVLQKIVSFDDSLADSTEECRKIMQREVGKIDAEGDAQLVLKSVEATIEQPAPFEIEDLGDPKNCDSRTNDSADGSGGKLLKSSPSKNRIIRNFLGILKEKEADEKPEASNNDQLMYTDKSKPAHVRLSCLRSKIRDMEKQLEQAIQGREGITRLQQAYYTNPQHGNPSACTEPLISYAKKIEKLKMDIHNLKEFYAMLEMSVEEGQERSFGGRDTPDTTRSMSGSSTNQSSSKTIEDVLSGEAGNSSSADDSSKNILRQLFTTPKRLISSPKTSKSSTPTPLRRRAEISSPKILRSSFSGAIRKSLSTPDSVKVETAVTVTALFEFAKSSAETMSIEQGEILLVLEHDHGDGWTRTKNCRKHNEESGFVPTSYLQFPQ.

Positions 1–267 (MIPVSRFFTV…EVGKIDAEGD (267 aa)) constitute an F-BAR domain. Residues 283–315 (APFEIEDLGDPKNCDSRTNDSADGSGGKLLKSS) are disordered. Residues 291-302 (GDPKNCDSRTND) show a composition bias toward basic and acidic residues. The region spanning 352-429 (SKPAHVRLSC…IHNLKEFYAM (78 aa)) is the REM-1 domain. The stretch at 355–385 (AHVRLSCLRSKIRDMEKQLEQAIQGREGITR) forms a coiled coil. Disordered regions lie at residues 436–487 (EGQE…SSKN) and 499–519 (LISS…RRAE). The span at 437-449 (GQERSFGGRDTPD) shows a compositional bias: basic and acidic residues. Low complexity predominate over residues 453 to 464 (SMSGSSTNQSSS). The segment covering 475–487 (AGNSSSADDSSKN) has biased composition (polar residues). The segment covering 501–513 (SSPKTSKSSTPTP) has biased composition (low complexity). The SH3 domain maps to 547 to 610 (ETAVTVTALF…VPTSYLQFPQ (64 aa)).

It belongs to the FNBP1 family. Interacts (via SH3 domain) with wsp-1 and abi-1. Interacts with cdc-42 and (via SH3 domain) with wve-1.

It localises to the cell junction. The protein resides in the cell membrane. Its subcellular location is the cytoplasmic vesicle. The protein localises to the cytoplasm. It is found in the recycling endosome. Its function is as follows. Plays a role in protein trafficking, actin organization and embryonic morphogenesis. Potentially acts as a cdc-42 effector. May play a role in egg laying. Together with toca-1, is required for protein trafficking regulating yolk protein clathrin-mediated endocytosis by oocytes during oogenesis and retrograde recycling and the sorting of recycling endosome cargo proteins such as mig-14. Also, together with toca-2, controls the distribution of actin at cell junctions. In Caenorhabditis elegans, this protein is Transducer of Cdc42-dependent actin assembly protein 2 homolog.